A 228-amino-acid polypeptide reads, in one-letter code: MKPTRPFHQTPVITIDGPSASGKGTVAALVAASLGFHLLDSGALYRLAALASLRYGISGDDVDALVKLIDDLHITFREGLAQLDGVDVSAEIRAEEVGGRASAIAVHAPVRAALVARQRAFRKEPGLVADGRDMGTVIFQDAVLKVFMTASVEARAARRHKQLIQKGFSANIDDLLRDLRERDERDSQRVAAPLKPAADAKLLDTSALSVDQAVEQVVQWYEALVPHA.

17-25 (GPSASGKGT) is a binding site for ATP.

The protein belongs to the cytidylate kinase family. Type 1 subfamily.

It localises to the cytoplasm. It carries out the reaction CMP + ATP = CDP + ADP. The catalysed reaction is dCMP + ATP = dCDP + ADP. This is Cytidylate kinase from Paraburkholderia phytofirmans (strain DSM 17436 / LMG 22146 / PsJN) (Burkholderia phytofirmans).